The sequence spans 137 residues: Proofreading thioesterase EntH (137 aa).

Glutamate 63 acts as the Nucleophile or proton acceptor in catalysis.

It belongs to the thioesterase PaaI family. As to quaternary structure, homotetramer. Dimer of dimers. Interacts specifically with the aryl carrier protein (ArCP) domain of EntB.

It localises to the cytoplasm. The protein operates within siderophore biosynthesis; enterobactin biosynthesis. Its function is as follows. Required for optimal enterobactin synthesis. Acts as a proofreading enzyme that prevents EntB misacylation by hydrolyzing the thioester bound existing between EntB and wrongly charged molecules. The protein is Proofreading thioesterase EntH of Salmonella paratyphi B (strain ATCC BAA-1250 / SPB7).